The following is a 182-amino-acid chain: Glutathione-regulated potassium-efflux system ancillary protein KefG (182 aa).

The protein belongs to the NAD(P)H dehydrogenase (quinone) family. KefG subfamily. As to quaternary structure, interacts with KefB.

The protein resides in the cell inner membrane. The catalysed reaction is a quinone + NADH + H(+) = a quinol + NAD(+). The enzyme catalyses a quinone + NADPH + H(+) = a quinol + NADP(+). Functionally, regulatory subunit of a potassium efflux system that confers protection against electrophiles. Required for full activity of KefB. This Yersinia pestis bv. Antiqua (strain Nepal516) protein is Glutathione-regulated potassium-efflux system ancillary protein KefG.